A 97-amino-acid polypeptide reads, in one-letter code: MSLCIKLLHETQGHIVTMELENGSTYRGKLIEAEDNMNCQMRDISVTARDGRVSHLDQVYIRGSHIRFLIVPDMLRNAPMFKVGPGRSVPLPTRGRR.

One can recognise a Sm domain in the interval 3–75 (LCIKLLHETQ…IRFLIVPDML (73 aa)).

This sequence belongs to the snRNP core protein family. In terms of assembly, belongs to the 40S cdc5-associated complex (or cwf complex), a spliceosome sub-complex reminiscent of a late-stage spliceosome composed of the U2, U5 and U6 snRNAs and at least brr2, cdc5, cwf2/prp3, cwf3/syf1, cwf4/syf3, cwf5/ecm2, spp42/cwf6, cwf7/spf27, cwf8, cwf9, cwf10, cwf11, cwf12, prp45/cwf13, cwf14, cwf15, cwf16, cwf17, cwf18, cwf19, cwf20, cwf21, cwf22, cwf23, cwf24, cwf25, cwf26, cyp7/cwf27, cwf28, cwf29/ist3, lea1, msl1, prp5/cwf1, prp10, prp12/sap130, prp17, prp22, sap61, sap62, sap114, sap145, slu7, smb1, smd1, smd3, smf1, smg1 and syf2. Interacts with saf5; the interaction is direct.

It is found in the nucleus. Its subcellular location is the cytoplasm. It localises to the cytosol. Plays a role in pre-mRNA splicing as a core component of the spliceosomal U1, U2, U4 and U5 small nuclear ribonucleoproteins (snRNPs), the building blocks of the spliceosome. In Schizosaccharomyces pombe (strain 972 / ATCC 24843) (Fission yeast), this protein is Small nuclear ribonucleoprotein Sm D3 (smd3).